Reading from the N-terminus, the 1128-residue chain is Nck-associated protein 1 (1128 aa).

Positions 640 to 665 are disordered; sequence AVNKKSKKQTGKKGEPEREKPGVESM. Over residues 651–665 the composition is skewed to basic and acidic residues; it reads KKGEPEREKPGVESM. A helical transmembrane segment spans residues 995–1015; that stretch reads IACLLMVFVAVSLPTLASNVM.

The protein belongs to the HEM-1/HEM-2 family.

It is found in the cell membrane. Its subcellular location is the cell projection. It localises to the lamellipodium membrane. In terms of biological role, part of the WAVE complex that regulates lamellipodia formation. The WAVE complex regulates actin filament reorganization via its interaction with the Arp2/3 complex. Actin remodeling activity is regulated by RAC1. Plays a role in neural tube closure. This is Nck-associated protein 1 (nckap1) from Xenopus laevis (African clawed frog).